The primary structure comprises 506 residues: Arylsulfatase A (506 aa).

The N-terminal stretch at 1-17 (MALGTLFLALAAGLSTA) is a signal peptide. Residues Asp28, Asp29, and Cys68 each contribute to the Ca(2+) site. Cys68 acts as the Nucleophile in catalysis. Cys68 is subject to 3-oxoalanine (Cys). Residue Lys122 coordinates substrate. His124 is a catalytic residue. Ser149 is a binding site for substrate. 2 disulfides stabilise this stretch: Cys155-Cys171 and Cys160-Cys167. N-linked (GlcNAc...) asparagine glycosylation is present at Asn157. Residue Asn183 is glycosylated (N-linked (GlcNAc...) asparagine). A substrate-binding site is contributed by His228. Ca(2+) is bound by residues Asp280 and Asn281. Cystine bridges form between Cys299–Cys413, Cys487–Cys499, Cys488–Cys501, and Cys492–Cys498. Residue Lys301 participates in substrate binding. The N-linked (GlcNAc...) asparagine glycan is linked to Asn349.

It belongs to the sulfatase family. In terms of assembly, homodimer at neutral pH and homooctamer at acidic pH. Exists both as a single chain of 58 kDa (component A) or as a chain of 50 kDa (component B) linked by disulfide bond(s) to a 7 kDa chain (component C). Interacts with SUMF1. The cofactor is Ca(2+). In terms of processing, the conversion to 3-oxoalanine (also known as C-formylglycine, FGly), of a serine or cysteine residue in prokaryotes and of a cysteine residue in eukaryotes, is critical for catalytic activity. This post-translational modification is severely defective in multiple sulfatase deficiency (MSD).

The protein resides in the endoplasmic reticulum. It localises to the lysosome. It catalyses the reaction an N-acyl-1-beta-D-(3-O-sulfo)-galactosyl-sphing-4-enine + H2O = a beta-D-galactosyl-(1&lt;-&gt;1')-N-acylsphing-4-enine + sulfate + H(+). Its function is as follows. Hydrolyzes cerebroside sulfate. In Mus musculus (Mouse), this protein is Arylsulfatase A (Arsa).